Consider the following 107-residue polypeptide: Metallothionein-1 (107 aa).

This sequence belongs to the metallothionein superfamily. Type 7 family.

The metallothioneins are involved in the cellular sequestration of toxic metal ions. Binds 12 cadmium ions per molecule. The protein is Metallothionein-1 of Tetrahymena thermophila.